The sequence spans 231 residues: Orotate phosphoribosyltransferase (231 aa).

Residues Lys27, 79–80 (YK), Arg106, Lys107, Lys110, His112, and 133–141 (DDVMTAGTA) each bind 5-phospho-alpha-D-ribose 1-diphosphate. Thr137 and Arg166 together coordinate orotate.

This sequence belongs to the purine/pyrimidine phosphoribosyltransferase family. PyrE subfamily. As to quaternary structure, homodimer. Requires Mg(2+) as cofactor.

The catalysed reaction is orotidine 5'-phosphate + diphosphate = orotate + 5-phospho-alpha-D-ribose 1-diphosphate. It functions in the pathway pyrimidine metabolism; UMP biosynthesis via de novo pathway; UMP from orotate: step 1/2. Catalyzes the transfer of a ribosyl phosphate group from 5-phosphoribose 1-diphosphate to orotate, leading to the formation of orotidine monophosphate (OMP). In Bifidobacterium longum (strain DJO10A), this protein is Orotate phosphoribosyltransferase.